The primary structure comprises 65 residues: Venom protein Vn4.6 (65 aa).

The signal sequence occupies residues 1-23; that stretch reads MSKIILAIFLIVLCGLIFVTVDA.

Contains 2 disulfide bonds. As to expression, expressed by the venom gland.

The protein localises to the secreted. Endoparasitoid venom protein that interferes with the activation of host hemolymph prophenoloxidase. May act in conjunction with other venom proteins (such as Vn50), by competitive binding to the zymogen and thereby interrupting the enzyme. In Cotesia rubecula (Cabbage white butterfly parasite), this protein is Venom protein Vn4.6.